Reading from the N-terminus, the 410-residue chain is Na(+)/H(+) antiporter NhaS4 (410 aa).

The next 11 helical transmembrane spans lie at Leu7 to Phe27, Pro33 to Leu53, Phe69 to Leu89, Val107 to Leu127, Phe135 to Ala155, Leu173 to Val193, Ile199 to Leu219, Leu241 to Ile261, Phe291 to Gly311, Trp319 to Val339, and Gly376 to Ile396.

Belongs to the monovalent cation:proton antiporter 2 (CPA2) transporter (TC 2.A.37) family.

It localises to the membrane. Its function is as follows. Na(+)/H(+) antiporter. This is Na(+)/H(+) antiporter NhaS4 (nhaS4) from Synechocystis sp. (strain ATCC 27184 / PCC 6803 / Kazusa).